We begin with the raw amino-acid sequence, 78 residues long: uncharacterized protein (78 aa).

This is an uncharacterized protein from Escherichia coli (strain K12).